A 335-amino-acid chain; its full sequence is RVS161-like protein RVS162 (335 aa).

Residues 17–310 (VMLKTGHIEQ…LDAQTRQDYI (294 aa)) form the BAR domain. A coiled-coil region spans residues 30-56 (KEYEFQEKRYRTMEENSIKLQKNLRLY). Residues 105-127 (HEEEGEEKEEEENDNTTTTTTTT) form a disordered region. The segment covering 107-118 (EEGEEKEEEEND) has biased composition (acidic residues). The stretch at 222–259 (TNIIELNHNQYEEKLKIYNQELTEVESKYVEINNQLLI) forms a coiled coil.

It is found in the cytoplasm. The protein localises to the cytoskeleton. Component of a cytoskeletal structure that is required for membrane curvature. The protein is RVS161-like protein RVS162 of Candida albicans (strain SC5314 / ATCC MYA-2876) (Yeast).